We begin with the raw amino-acid sequence, 598 residues long: Aspartate--tRNA(Asp/Asn) ligase (598 aa).

Glu177 contributes to the L-aspartate binding site. The segment at 201-204 is aspartate; the sequence is QLFK. An L-aspartate-binding site is contributed by Arg223. ATP contacts are provided by residues 223-225 and Gln232; that span reads RDE. His456 lines the L-aspartate pocket. Glu493 provides a ligand contact to ATP. An L-aspartate-binding site is contributed by Arg500. 545 to 548 is an ATP binding site; that stretch reads GLDR.

The protein belongs to the class-II aminoacyl-tRNA synthetase family. Type 1 subfamily. Homodimer.

It localises to the cytoplasm. The catalysed reaction is tRNA(Asx) + L-aspartate + ATP = L-aspartyl-tRNA(Asx) + AMP + diphosphate. Its function is as follows. Aspartyl-tRNA synthetase with relaxed tRNA specificity since it is able to aspartylate not only its cognate tRNA(Asp) but also tRNA(Asn). Reaction proceeds in two steps: L-aspartate is first activated by ATP to form Asp-AMP and then transferred to the acceptor end of tRNA(Asp/Asn). The polypeptide is Aspartate--tRNA(Asp/Asn) ligase (Prochlorococcus marinus (strain AS9601)).